Here is a 146-residue protein sequence, read N- to C-terminus: Single-stranded DNA-binding protein, mitochondrial (146 aa).

The transit peptide at 1-16 (MLRNASAQILKQFVRH) directs the protein to the mitochondrion. One can recognise an SSB domain in the interval 29 to 140 (INKVQILGRV…IIADNIVFLS (112 aa)).

The protein localises to the mitochondrion. Its subcellular location is the mitochondrion matrix. It localises to the mitochondrion nucleoid. Its function is as follows. Binds preferentially and cooperatively to pyrimidine rich single-stranded DNA (ss-DNA). May be required to maintain the copy number of mitochondrial DNA (mtDNA) and play a crucial role during mtDNA replication. Required for retinal ganglion cell differentiation and retinal integrity. This chain is Single-stranded DNA-binding protein, mitochondrial, found in Danio rerio (Zebrafish).